A 244-amino-acid chain; its full sequence is Ribonuclease PH (244 aa).

Phosphate contacts are provided by residues Arg90 and 128–130; that span reads GTR.

The protein belongs to the RNase PH family. Homohexameric ring arranged as a trimer of dimers.

The enzyme catalyses tRNA(n+1) + phosphate = tRNA(n) + a ribonucleoside 5'-diphosphate. Phosphorolytic 3'-5' exoribonuclease that plays an important role in tRNA 3'-end maturation. Removes nucleotide residues following the 3'-CCA terminus of tRNAs; can also add nucleotides to the ends of RNA molecules by using nucleoside diphosphates as substrates, but this may not be physiologically important. Probably plays a role in initiation of 16S rRNA degradation (leading to ribosome degradation) during starvation. This is Ribonuclease PH from Cutibacterium acnes (strain DSM 16379 / KPA171202) (Propionibacterium acnes).